A 689-amino-acid polypeptide reads, in one-letter code: Elongation factor G (689 aa).

Residues 9–283 (AKFRNIGIMA…AIIEFMPSPL (275 aa)) form the tr-type G domain. Residues 18 to 25 (AHIDAGKT), 82 to 86 (DTPGH), and 136 to 139 (NKMD) each bind GTP.

Belongs to the TRAFAC class translation factor GTPase superfamily. Classic translation factor GTPase family. EF-G/EF-2 subfamily.

The protein localises to the cytoplasm. In terms of biological role, catalyzes the GTP-dependent ribosomal translocation step during translation elongation. During this step, the ribosome changes from the pre-translocational (PRE) to the post-translocational (POST) state as the newly formed A-site-bound peptidyl-tRNA and P-site-bound deacylated tRNA move to the P and E sites, respectively. Catalyzes the coordinated movement of the two tRNA molecules, the mRNA and conformational changes in the ribosome. This chain is Elongation factor G, found in Clostridium botulinum (strain ATCC 19397 / Type A).